The sequence spans 254 residues: 21S rRNA pseudouridine(2819) synthase (254 aa).

Asp71 is a catalytic residue.

This sequence belongs to the pseudouridine synthase RluA family.

Its subcellular location is the mitochondrion. It carries out the reaction uridine(2819) in 21S rRNA = pseudouridine(2819) in 21S rRNA. Its function is as follows. Pseudouridylate synthase responsible for the pseudouridine-2819 formation in mitochondrial 21S rRNA. May modulate the efficiency or the fidelity of the mitochondrial translation machinery. This chain is 21S rRNA pseudouridine(2819) synthase (PUS5), found in Saccharomyces cerevisiae (strain ATCC 204508 / S288c) (Baker's yeast).